The sequence spans 1338 residues: MSAIELPPLRSRSEEAARAEHNAQTLAHENANIAGYDESPAVQQVETDAPETKGAPQASFKNYFRVFSYGTKLDYFLISLCCFTSIGAGTAMPLMNIVFGKLVGNFTDYFIPGSNVTRQEFEAEINKLALYIFYLFIGKFAMSYISMLAIRISGMRISAALRLAYLRALFAQPVSVIDTVSPGKVANRITTSSNIVQLAISQHFATLFQSLAFTVGLYVVALVKGWKLTLIASTGLPFILIVYGAMFPPFLRIHQITDKFQEEASAMAYEMFSSIRMIVAFGTESRLAKQHGVMLSKAASNEKRAAPLMGLTMSPAMVAMYGIFGITFWFGIKEYTKGRISSVGDITVVLFSVMMAVMNIGRVASPIISIAKAATAATELFVTIDASFHDTSGVMEPEVTGNAAITFINVAFSYPSRPGVPILKGLDLTITAGKVTAIVGPSGSGKSTIVGLIQRWYDLLGTTATAKKIDETEIPSSSTMASSPIEAVYDNTDKKSKKGKAGEEEEPEQDLGPNTCTGSLSVGRTNLRNVDVRWWRSQIGMVQQEPFLFNDTIYNNIVFGLCGTRYEGLSKDEKKIMVDEACREACAEEFISRLPQGLDTLVGESGIKLSGGQRQRIAIARSIIKRPPILILDEATSAIDVRTERIVQEALDRVSKNRTTIVIAHRLSTIKRADSIVVLRQGQLVEQGTHEELLKNGDGVYYGLVHAQELEMDAEDDDDHSSSLENIKMNDTKEDTASSGFEGHASREDSTYQNVGLLHSLGRLVVEQRHHWILYSVCCIGILGAGAVYPLQAYIFARIINVFTLTGPELVKQGNFWAGMFGVLAGGVGLSYYLLGAASHLISVELTRKYRSEYLSNMIRKPILFFDDKVHSPGSLTSRLSSDSQQVQQLLSMEMSMALIACTNLLGCTIIAFVYGWKLSLVGLFAALPLILGAGLVRTRLEIQLEAENAKVFENSSQFATEAVAGFRTVLSLLMEPMIRSRYDKLLKGHVVEALAKAKYGTIIFAASDSLELACMSLTFWYGGKLLASREYDLIQFFIVYTAIIQGATAAGIWFSFTPSMAQATGAANRILSMRPTSTDPSSYSPLPCSDEGVGIEFQHVSFKYQSRDVPVLSNLNLQILPGQVAALVGSSGCGKSTTLSLLERFYDASSGHILYNGQDITTFSPAEYRKQMSLVSQEPTLYQGSIRENISLSVESASDDDIKQACRDAQIHDFITSLPEGYETRLGPKGMSLSGGQRQRISLARALLRKPKILLLDEATSSLDSESEKYVQEAIERAASEGDRTVIIVAHRLATIQKADVIFVLGSGKVLEKGDHQALLRKKGVYWQMCQAQALNR.

The segment at 1 to 21 (MSAIELPPLRSRSEEAARAEH) is disordered. Positions 11-21 (SRSEEAARAEH) are enriched in basic and acidic residues. The next 6 membrane-spanning stretches (helical) occupy residues 75 to 95 (YFLI…MPLM), 130 to 150 (LYIF…MLAI), 203 to 223 (HFAT…VALV), 230 to 250 (LIAS…FPPF), 312 to 332 (TMSP…WFGI), and 340 to 360 (ISSV…VMNI). The ABC transmembrane type-1 1 domain maps to 80 to 372 (LCCFTSIGAG…VASPIISIAK (293 aa)). An ABC transporter 1 domain is found at 405-706 (ITFINVAFSY…GDGVYYGLVH (302 aa)). 440–447 (GPSGSGKS) serves as a coordination point for ATP. Disordered regions lie at residues 473 to 518 (EIPS…TCTG) and 715 to 747 (EDDD…HASR). Helical transmembrane passes span 777–797 (VCCI…YIFA), 816–836 (FWAG…YLLG), 895–917 (MSMA…VYGW), 919–941 (LSLV…RTRL), 1003–1023 (IIFA…FWYG), and 1037–1057 (FFIV…WFSF). Residues 777 to 1063 (VCCIGILGAG…WFSFTPSMAQ (287 aa)) form the ABC transmembrane type-1 2 domain. The ABC transporter 2 domain maps to 1096-1333 (IEFQHVSFKY…KGVYWQMCQA (238 aa)). 1130 to 1137 (GSSGCGKS) is an ATP binding site.

The protein belongs to the ABC transporter superfamily. ABCB family. Multidrug resistance exporter (TC 3.A.1.201) subfamily.

The protein localises to the cell membrane. It participates in secondary metabolite biosynthesis. Functionally, ABC transporter; part of the gene cluster that mediates the biosynthesis of KK-1, a novel cyclic depsipeptide with 10 residues which is a promising active compound with high activity against many plant pathogens, especially Botrytis cinerea. Is probably directly involved in the secretion of KK-1 and thus confers self-tolerance against KK-1. This Curvularia clavata protein is ABC-type transporter kk1G.